Consider the following 113-residue polypeptide: Iron-sulfur cluster insertion protein ErpA (113 aa).

Iron-sulfur cluster-binding residues include Cys41, Cys105, and Cys107.

The protein belongs to the HesB/IscA family. As to quaternary structure, homodimer. The cofactor is iron-sulfur cluster.

In terms of biological role, required for insertion of 4Fe-4S clusters for at least IspG. The chain is Iron-sulfur cluster insertion protein ErpA from Colwellia psychrerythraea (strain 34H / ATCC BAA-681) (Vibrio psychroerythus).